The chain runs to 220 residues: GTP-binding nuclear protein GSP2/CNR2 (220 aa).

S2 carries the N-acetylserine modification. S2 carries the phosphoserine modification. The Small GTPase Ran-type domain maps to E10–N174. D21–T28 is a binding site for GTP. The switch-I stretch occupies residues K40 to V48. GTP contacts are provided by residues G71, N125–D128, and S153–K155. Positions G71–Q87 are switch-II.

The protein belongs to the small GTPase superfamily. Ran family. As to quaternary structure, found in a nuclear export complex with RanGTP, exportin and pre-miRNA.

Its subcellular location is the nucleus. Its function is as follows. GTP-binding protein involved in nucleocytoplasmic transport. Required for the import of protein into the nucleus and also for RNA export. Not essential for cell viability. The chain is GTP-binding nuclear protein GSP2/CNR2 (GSP2) from Saccharomyces cerevisiae (strain ATCC 204508 / S288c) (Baker's yeast).